The primary structure comprises 136 residues: Prefoldin subunit alpha (136 aa).

The protein belongs to the prefoldin subunit alpha family. In terms of assembly, heterohexamer of two alpha and four beta subunits.

The protein resides in the cytoplasm. Functionally, molecular chaperone capable of stabilizing a range of proteins. Seems to fulfill an ATP-independent, HSP70-like function in archaeal de novo protein folding. This chain is Prefoldin subunit alpha, found in Pyrobaculum arsenaticum (strain DSM 13514 / JCM 11321 / PZ6).